The chain runs to 254 residues: Probable glucose-1-phosphate cytidylyltransferase (254 aa).

Substrate is bound by residues 6 to 10, 11 to 13, Lys-23, Thr-103, Arg-108, and Gly-126; these read LCGGK and GTR. The Mg(2+) site is built by Asp-127 and Asp-232.

Belongs to the glucose-1-phosphate cytidylyltransferase family. The cofactor is Mg(2+).

The catalysed reaction is alpha-D-glucose 1-phosphate + CTP + H(+) = CDP-D-glucose + diphosphate. Catalyzes the transfer of a CMP moiety from CTP to glucose 1-phosphate. In Bacillus subtilis (strain 168), this protein is Probable glucose-1-phosphate cytidylyltransferase (yfnH).